A 539-amino-acid polypeptide reads, in one-letter code: Netrin-G1 (539 aa).

The first 18 residues, 1–18 (MYLSRFLSIHALWVTVSS), serve as a signal peptide directing secretion. 3 disulfides stabilise this stretch: Cys-33–Cys-50, Cys-72–Cys-92, and Cys-80–Cys-88. In terms of domain architecture, Laminin N-terminal spans 46–296 (DYTACQPEST…AISDIKVRGR (251 aa)). Residues 80–91 (CAMGNPYMCNNE) form an NGL discriminant loop I region. Residue Asn-133 is glycosylated (N-linked (GlcNAc...) asparagine). An intrachain disulfide couples Cys-182 to Cys-206. The NGL discriminant loop II stretch occupies residues 208-214 (EEYSTGY). Residues 273-275 (EIF) form an NGL discriminant loop III region. 13 disulfides stabilise this stretch: Cys-297/Cys-306, Cys-299/Cys-315, Cys-317/Cys-326, Cys-329/Cys-354, Cys-364/Cys-373, Cys-366/Cys-384, Cys-387/Cys-396, Cys-399/Cys-417, Cys-420/Cys-432, Cys-422/Cys-438, Cys-440/Cys-449, Cys-452/Cys-462, and Cys-488/Cys-497. Laminin EGF-like domains are found at residues 297–356 (CKCN…TCIP), 364–419 (CECF…VCIE), and 420–469 (CYCN…VCDN). An N-linked (GlcNAc...) asparagine glycan is attached at Asn-320. A glycan (N-linked (GlcNAc...) asparagine) is linked at Asn-406. N-linked (GlcNAc...) asparagine glycosylation occurs at Asn-433. Ser-510 carries the GPI-anchor amidated serine lipid modification. Positions 511–539 (ESGQGAPPRGSPALLLLTMLLGTAGPLVF) are cleaved as a propeptide — removed in mature form.

N-glycosylated. Expression is restricted primarily to neurons of the CNS, particularly in the dorsal thalamus, olfactory bulb and inferior colliculus. Isoform 1A and isoform 1D are the major products in adult brain.

It localises to the cell membrane. In terms of biological role, involved in controlling patterning and neuronal circuit formation at the laminar, cellular, subcellular and synaptic levels. Promotes neurite outgrowth of both axons and dendrites. The chain is Netrin-G1 (Ntng1) from Mus musculus (Mouse).